The following is a 419-amino-acid chain: Synaptotagmin-2 (419 aa).

Over M1–P62 the chain is Vesicular. The tract at residues A16–S39 is disordered. N29 carries an N-linked (GlcNAc...) asparagine glycan. A helical membrane pass occupies residues W63 to I83. Residues C84 to K419 lie on the Cytoplasmic side of the membrane. The segment at G99–E138 is disordered. Residues D116–E136 are compositionally biased toward acidic residues. Phosphothreonine is present on residues T122 and T125. Residues E133–N379 form a phospholipid binding region. 2 consecutive C2 domains span residues N139–R258 and K270–H403. The Ca(2+) site is built by L169, D170, and D176. T199 is modified (phosphothreonine). Position 227 is a phosphotyrosine (Y227). The Ca(2+) site is built by D228, F229, D230, S233, K234, D236, D301, D307, D361, and D363. At T383 the chain carries Phosphothreonine.

Belongs to the synaptotagmin family. In terms of assembly, homotetramer. Heterodimer; heterodimerizes with SYT1 in presence of calcium. Interacts with STON2. Interacts with SCAMP5. Interacts with PRRT2. Requires Ca(2+) as cofactor. Phosphorylation at Thr-199 by WNK1, changes the calcium requirement for SYT2-binding to phospholipid membranes. As to expression, expressed at the neuromuscular junction. Expressed in melanocytes.

The protein localises to the cytoplasmic vesicle. It is found in the secretory vesicle. The protein resides in the synaptic vesicle membrane. It localises to the chromaffin granule membrane. Its subcellular location is the cytoplasm. Functionally, exhibits calcium-dependent phospholipid and inositol polyphosphate binding properties. May have a regulatory role in the membrane interactions during trafficking of synaptic vesicles at the active zone of the synapse. Plays a role in dendrite formation by melanocytes. The chain is Synaptotagmin-2 from Homo sapiens (Human).